We begin with the raw amino-acid sequence, 427 residues long: V-type proton ATPase subunit C 2 (427 aa).

The interval 298-320 (PLGNPARPAAGQTDRDRESEGEG) is disordered.

This sequence belongs to the V-ATPase C subunit family. In terms of assembly, V-ATPase is a heteromultimeric enzyme made up of two complexes: the ATP-hydrolytic V1 complex and the proton translocation V0 complex. The V1 complex consists of three catalytic AB heterodimers that form a heterohexamer, three peripheral stalks each consisting of EG heterodimers, one central rotor including subunits D and F, and the regulatory subunits C and H. The proton translocation complex V0 consists of the proton transport subunit a, a ring of proteolipid subunits c9c'', rotary subunit d, subunits e and f, and the accessory subunits ATP6AP1/Ac45 and ATP6AP2/PRR. Predominantly expressed in the lung and kidney. Isoform 1 is lung-specific while isoform 3 is a kidney-specific isoform. Isoform 1 is localized in the lamellar bodies of type II alveolar cells. Isoform 2 is strongly expressed in the cortical and medulla collecting ducts and is found in the plasma membranes of renal alpha and beta intercalated cells.

Its function is as follows. Subunit of the V1 complex of vacuolar(H+)-ATPase (V-ATPase), a multisubunit enzyme composed of a peripheral complex (V1) that hydrolyzes ATP and a membrane integral complex (V0) that translocates protons. V-ATPase is responsible for acidifying and maintaining the pH of intracellular compartments and in some cell types, is targeted to the plasma membrane, where it is responsible for acidifying the extracellular environment. Subunit C is necessary for the assembly of the catalytic sector of the enzyme and is likely to have a specific function in its catalytic activity. The chain is V-type proton ATPase subunit C 2 (Atp6v1c2) from Mus musculus (Mouse).